A 199-amino-acid polypeptide reads, in one-letter code: dITP/XTP pyrophosphatase (199 aa).

Position 8-13 (8-13 (SGNAGK)) interacts with substrate. The active-site Proton acceptor is the Asp-69. Position 69 (Asp-69) interacts with Mg(2+). Substrate is bound by residues Ser-70, 154-157 (FGYN), Lys-177, and 182-183 (HR).

It belongs to the HAM1 NTPase family. As to quaternary structure, homodimer. Requires Mg(2+) as cofactor.

The catalysed reaction is XTP + H2O = XMP + diphosphate + H(+). It catalyses the reaction dITP + H2O = dIMP + diphosphate + H(+). It carries out the reaction ITP + H2O = IMP + diphosphate + H(+). Its function is as follows. Pyrophosphatase that catalyzes the hydrolysis of nucleoside triphosphates to their monophosphate derivatives, with a high preference for the non-canonical purine nucleotides XTP (xanthosine triphosphate), dITP (deoxyinosine triphosphate) and ITP. Seems to function as a house-cleaning enzyme that removes non-canonical purine nucleotides from the nucleotide pool, thus preventing their incorporation into DNA/RNA and avoiding chromosomal lesions. This Xanthomonas axonopodis pv. citri (strain 306) protein is dITP/XTP pyrophosphatase.